Reading from the N-terminus, the 872-residue chain is Alanine--tRNA ligase (872 aa).

Histidine 567, histidine 571, cysteine 669, and histidine 673 together coordinate Zn(2+).

The protein belongs to the class-II aminoacyl-tRNA synthetase family. Zn(2+) is required as a cofactor.

Its subcellular location is the cytoplasm. The catalysed reaction is tRNA(Ala) + L-alanine + ATP = L-alanyl-tRNA(Ala) + AMP + diphosphate. Its function is as follows. Catalyzes the attachment of alanine to tRNA(Ala) in a two-step reaction: alanine is first activated by ATP to form Ala-AMP and then transferred to the acceptor end of tRNA(Ala). Also edits incorrectly charged Ser-tRNA(Ala) and Gly-tRNA(Ala) via its editing domain. This Streptococcus gordonii (strain Challis / ATCC 35105 / BCRC 15272 / CH1 / DL1 / V288) protein is Alanine--tRNA ligase.